A 359-amino-acid polypeptide reads, in one-letter code: Phospho-N-acetylmuramoyl-pentapeptide-transferase (359 aa).

Helical transmembrane passes span 27-47 (IGAA…FIRT), 71-91 (VPTM…LLWA), 93-113 (LDNP…MIGA), 134-154 (LLLQ…HPGY), 170-190 (LGWF…NAVN), 203-223 (MVVS…VVLA), 234-254 (SGEL…FLWF), 262-282 (FMGD…AIII), 286-306 (FLLA…MLQV), and 336-356 (KVVV…IATL).

Belongs to the glycosyltransferase 4 family. MraY subfamily. Requires Mg(2+) as cofactor.

It localises to the cell inner membrane. The catalysed reaction is UDP-N-acetyl-alpha-D-muramoyl-L-alanyl-gamma-D-glutamyl-meso-2,6-diaminopimeloyl-D-alanyl-D-alanine + di-trans,octa-cis-undecaprenyl phosphate = di-trans,octa-cis-undecaprenyl diphospho-N-acetyl-alpha-D-muramoyl-L-alanyl-D-glutamyl-meso-2,6-diaminopimeloyl-D-alanyl-D-alanine + UMP. Its pathway is cell wall biogenesis; peptidoglycan biosynthesis. Functionally, catalyzes the initial step of the lipid cycle reactions in the biosynthesis of the cell wall peptidoglycan: transfers peptidoglycan precursor phospho-MurNAc-pentapeptide from UDP-MurNAc-pentapeptide onto the lipid carrier undecaprenyl phosphate, yielding undecaprenyl-pyrophosphoryl-MurNAc-pentapeptide, known as lipid I. This Desulfotalea psychrophila (strain LSv54 / DSM 12343) protein is Phospho-N-acetylmuramoyl-pentapeptide-transferase.